The following is a 340-amino-acid chain: Phospho-N-acetylmuramoyl-pentapeptide-transferase (340 aa).

10 helical membrane passes run 3–23, 53–73, 79–99, 119–139, 144–164, 176–196, 200–220, 227–247, 250–270, and 315–335; these read MSLI…PHFI, GGTV…FHVF, AYGA…IGFL, MALQ…PSGT, IGGL…FWIV, IDGL…IIAF, ELAI…FFVF, VFMG…ISIA, VEWT…SVML, and VDAF…WMVL.

The protein belongs to the glycosyltransferase 4 family. MraY subfamily. Requires Mg(2+) as cofactor.

It is found in the cell membrane. It catalyses the reaction UDP-N-acetyl-alpha-D-muramoyl-L-alanyl-gamma-D-glutamyl-L-lysyl-D-alanyl-D-alanine + di-trans,octa-cis-undecaprenyl phosphate = Mur2Ac(oyl-L-Ala-gamma-D-Glu-L-Lys-D-Ala-D-Ala)-di-trans,octa-cis-undecaprenyl diphosphate + UMP. The protein operates within cell wall biogenesis; peptidoglycan biosynthesis. Functionally, catalyzes the initial step of the lipid cycle reactions in the biosynthesis of the cell wall peptidoglycan: transfers peptidoglycan precursor phospho-MurNAc-pentapeptide from UDP-MurNAc-pentapeptide onto the lipid carrier undecaprenyl phosphate, yielding undecaprenyl-pyrophosphoryl-MurNAc-pentapeptide, known as lipid I. This is Phospho-N-acetylmuramoyl-pentapeptide-transferase from Streptococcus thermophilus (strain CNRZ 1066).